The sequence spans 810 residues: Cell division control protein 48 homolog E (810 aa).

N-acetylserine is present on Ser-2. Ser-41 carries the post-translational modification Phosphoserine. ATP contacts are provided by residues 248–255 (GPPGSGKT) and 521–528 (GPPGCGKT).

Belongs to the AAA ATPase family.

It localises to the nucleus. Its subcellular location is the cytoplasm. The protein localises to the cytoskeleton. The protein resides in the phragmoplast. Functionally, probably functions in cell division and growth processes. Interacts with certain SNAREs as part of specialized membrane fusion events where vesicles from the same organelle fuse (homotypic fusion). The polypeptide is Cell division control protein 48 homolog E (CDC48E) (Arabidopsis thaliana (Mouse-ear cress)).